Consider the following 198-residue polypeptide: Ras-related protein RabH (198 aa).

14–21 (GDWNVGKS) contacts GTP. Residues 36-44 (TKLSMGEHF) carry the Effector region motif. Residues 62-66 (DTSGM) and 120-123 (SKFD) each bind GTP. At Cys195 the chain carries Cysteine methyl ester. Cys195 carries the S-geranylgeranyl cysteine lipid modification. The propeptide at 196 to 198 (SIN) is removed in mature form.

Belongs to the small GTPase superfamily. Rab family.

It is found in the cell membrane. The sequence is that of Ras-related protein RabH (rabH) from Dictyostelium discoideum (Social amoeba).